The sequence spans 244 residues: Type III pantothenate kinase (244 aa).

6-13 contributes to the ATP binding site; that stretch reads DVGNTRIK. Residues Tyr-87 and 94–97 contribute to the substrate site; that span reads GIDR. Catalysis depends on Asp-96, which acts as the Proton acceptor. Asp-117 is a binding site for K(+). Thr-120 contributes to the ATP binding site. Thr-172 lines the substrate pocket.

Belongs to the type III pantothenate kinase family. As to quaternary structure, homodimer. It depends on NH4(+) as a cofactor. Requires K(+) as cofactor.

The protein resides in the cytoplasm. It catalyses the reaction (R)-pantothenate + ATP = (R)-4'-phosphopantothenate + ADP + H(+). It participates in cofactor biosynthesis; coenzyme A biosynthesis; CoA from (R)-pantothenate: step 1/5. Its function is as follows. Catalyzes the phosphorylation of pantothenate (Pan), the first step in CoA biosynthesis. The protein is Type III pantothenate kinase of Flavobacterium johnsoniae (strain ATCC 17061 / DSM 2064 / JCM 8514 / BCRC 14874 / CCUG 350202 / NBRC 14942 / NCIMB 11054 / UW101) (Cytophaga johnsonae).